The sequence spans 495 residues: Monoamine oxidase N (495 aa).

Residues 1–19 (MTSRDGYQWTPETGLTQGV) show a composition bias toward polar residues. A disordered region spans residues 1–23 (MTSRDGYQWTPETGLTQGVPSLG). Positions 493–495 (ARL) match the Microbody targeting signal motif.

It belongs to the flavin monoamine oxidase family. Requires FAD as cofactor.

It is found in the peroxisome. It carries out the reaction a secondary aliphatic amine + O2 + H2O = a primary amine + an aldehyde + H2O2. In Aspergillus niger, this protein is Monoamine oxidase N (maoN).